Reading from the N-terminus, the 192-residue chain is Superoxide dismutase [Fe] (192 aa).

4 residues coordinate Fe cation: His27, His74, Asp157, and His161.

It belongs to the iron/manganese superoxide dismutase family. Homodimer. Requires Fe cation as cofactor.

The enzyme catalyses 2 superoxide + 2 H(+) = H2O2 + O2. Destroys superoxide anion radicals which are normally produced within the cells and which are toxic to biological systems. The chain is Superoxide dismutase [Fe] (sodB) from Bordetella pertussis (strain Tohama I / ATCC BAA-589 / NCTC 13251).